We begin with the raw amino-acid sequence, 1486 residues long: Chromosome partition protein MukB (1486 aa).

34 to 41 (GGNGAGKS) contributes to the ATP binding site. Coiled-coil stretches lie at residues 326-418 (LEAD…QYNQ), 444-480 (LETFQAKELEATEKMLSLEQKMSMAQTAHSQFEQAYQ), and 509-603 (RHLA…RAPV). A flexible hinge region spans residues 666–783 (PGGSEDQRLN…EVPLFGRAAR (118 aa)). Coiled-coil stretches lie at residues 835–923 (EAEI…AKLE), 977–1115 (EMLS…TAKA), and 1209–1266 (VEAI…QNVS).

It belongs to the SMC family. MukB subfamily. Homodimerization via its hinge domain. Binds to DNA via its C-terminal region. Interacts, and probably forms a ternary complex, with MukE and MukF via its C-terminal region. The complex formation is stimulated by calcium or magnesium. Interacts with tubulin-related protein FtsZ.

It localises to the cytoplasm. The protein localises to the nucleoid. Its function is as follows. Plays a central role in chromosome condensation, segregation and cell cycle progression. Functions as a homodimer, which is essential for chromosome partition. Involved in negative DNA supercoiling in vivo, and by this means organize and compact chromosomes. May achieve or facilitate chromosome segregation by condensation DNA from both sides of a centrally located replisome during cell division. The polypeptide is Chromosome partition protein MukB (Shigella boydii serotype 18 (strain CDC 3083-94 / BS512)).